We begin with the raw amino-acid sequence, 220 residues long: MVTIVTCADRRGAFPGASPDVPARVWRFLAEQSRALTASRLGTTVVVFDRALVKTAAGCTSTSTSTPAAGWLLSTQRPWPAPGGAGLARHRQPAERVSVVGGYNLLNSGRAGARPFHMWVFGAADLYAPIFAHIAATTRLVYAQLDCTFAGAAWRLPRRGPAIASPWPPYDTPALPELVAGGVLLRLVYEVVDRGAAPRPAKREPPCPGGLPPGAPCAIL.

Belongs to the herpesviridae US2 family.

The protein is Protein US2 homolog of Bovine herpesvirus 1.2 (strain ST) (BoHV-1).